A 178-amino-acid polypeptide reads, in one-letter code: Transcription termination/antitermination protein NusG (178 aa).

Positions 130-159 (SVKVKEGPFANFIGTIEEIQLDKRKLKVHV) constitute a KOW domain.

This sequence belongs to the NusG family.

Functionally, participates in transcription elongation, termination and antitermination. In Halalkalibacterium halodurans (strain ATCC BAA-125 / DSM 18197 / FERM 7344 / JCM 9153 / C-125) (Bacillus halodurans), this protein is Transcription termination/antitermination protein NusG.